Here is a 659-residue protein sequence, read N- to C-terminus: Fructose-1,6-bisphosphatase class 3 (659 aa).

Belongs to the FBPase class 3 family. The cofactor is Mn(2+).

The enzyme catalyses beta-D-fructose 1,6-bisphosphate + H2O = beta-D-fructose 6-phosphate + phosphate. It functions in the pathway carbohydrate biosynthesis; gluconeogenesis. The protein is Fructose-1,6-bisphosphatase class 3 of Clostridium botulinum (strain Alaska E43 / Type E3).